A 224-amino-acid chain; its full sequence is Vesicle transport through interaction with t-SNAREs homolog 1A (224 aa).

Residues 1–199 lie on the Cytoplasmic side of the membrane; the sequence is MSADFEGYEQ…GMLRRIIQNR (199 aa). Coiled coils occupy residues 31-92 and 106-185; these read PDEK…KRSR and DAGN…GKSS. A helical; Anchor for type IV membrane protein membrane pass occupies residues 200–220; sequence ILLVILGIIVVITILTAITFF. The Vesicular portion of the chain corresponds to 221-224; it reads VRGH.

The protein belongs to the VTI1 family. Interacts with distinct SNARE complexes that contain either STX5 or STX6. Interacts with NAPA and, to a lesser extent, with NAPG. Identified in a complex containing STX6, STX12, VAMP4 and VTI1A. Specifically expressed in the neuronal tissues cerebellum, cortex and hippocampus. Isoform 1/VTI1A is expressed in the same neuronal tissues but also in lung, liver, kidney and spleen.

It localises to the membrane. The protein localises to the cytoplasmic vesicle. Its subcellular location is the secretory vesicle. The protein resides in the synaptic vesicle membrane. It is found in the clathrin-coated vesicle membrane. It localises to the golgi apparatus membrane. Its function is as follows. V-SNARE that mediates vesicle transport pathways through interactions with t-SNAREs on the target membrane. These interactions are proposed to mediate aspects of the specificity of vesicle trafficking and to promote fusion of the lipid bilayers. Involved in vesicular transport from the late endosomes to the trans-Golgi network. Along with VAMP7, involved in an non-conventional RAB1-dependent traffic route to the cell surface used by KCNIP1 and KCND2. May be concerned with increased secretion of cytokines associated with cellular senescence. The sequence is that of Vesicle transport through interaction with t-SNAREs homolog 1A (Vti1a) from Rattus norvegicus (Rat).